The primary structure comprises 551 residues: Scaffold protein OPG125 (551 aa).

The protein belongs to the orthopoxvirus protein OPG125 family. Interacts with the late transcription elongation factor VLTF-4/OPG110. Interacts with the late transcription factors VLTF-1.

The protein localises to the membrane. Acts with RNA polymerase to initiate transcription from late gene promoters. This is Scaffold protein OPG125 (OPG125) from Monkeypox virus.